The primary structure comprises 310 residues: Methionyl-tRNA formyltransferase (310 aa).

A (6S)-5,6,7,8-tetrahydrofolate-binding site is contributed by 109–112 (SLLP).

Belongs to the Fmt family.

The catalysed reaction is L-methionyl-tRNA(fMet) + (6R)-10-formyltetrahydrofolate = N-formyl-L-methionyl-tRNA(fMet) + (6S)-5,6,7,8-tetrahydrofolate + H(+). Attaches a formyl group to the free amino group of methionyl-tRNA(fMet). The formyl group appears to play a dual role in the initiator identity of N-formylmethionyl-tRNA by promoting its recognition by IF2 and preventing the misappropriation of this tRNA by the elongation apparatus. The sequence is that of Methionyl-tRNA formyltransferase from Macrococcus caseolyticus (strain JCSC5402) (Macrococcoides caseolyticum).